We begin with the raw amino-acid sequence, 169 residues long: MGASPIFYLHSMHEGVQVSSKLEQLQALLAPVVEGLGYQCWGIEYVSQGKHSVLRIYIDKEGGILVDDCEAVSRQASAILDVEDPISSEYTLEVSSPGMDRPLFTLEQFASHAGEQVKIKLRSPFEGRRNFQGLLRGVEEQDVVVQVDNQEFLLPIDSIDKANIIPSFD.

It belongs to the RimP family.

The protein localises to the cytoplasm. Functionally, required for maturation of 30S ribosomal subunits. The sequence is that of Ribosome maturation factor RimP from Pseudomonas putida (strain ATCC 700007 / DSM 6899 / JCM 31910 / BCRC 17059 / LMG 24140 / F1).